We begin with the raw amino-acid sequence, 489 residues long: Kynureninase 2 (489 aa).

A compositionally biased stretch (polar residues) spans 1-12; that stretch reads MDASAAISQLRQ. A disordered region spans residues 1 to 25; that stretch reads MDASAAISQLRQGQKPEWPQNANTS. Pyridoxal 5'-phosphate is bound by residues Leu149, Thr150, 177-180, Asp261, His264, and Tyr286; that span reads FPSD. Lys287 is subject to N6-(pyridoxal phosphate)lysine. 2 residues coordinate pyridoxal 5'-phosphate: Trp317 and Asn345.

The protein belongs to the kynureninase family. Homodimer. Pyridoxal 5'-phosphate is required as a cofactor.

It localises to the cytoplasm. The catalysed reaction is L-kynurenine + H2O = anthranilate + L-alanine + H(+). It carries out the reaction 3-hydroxy-L-kynurenine + H2O = 3-hydroxyanthranilate + L-alanine + H(+). It functions in the pathway amino-acid degradation; L-kynurenine degradation; L-alanine and anthranilate from L-kynurenine: step 1/1. The protein operates within cofactor biosynthesis; NAD(+) biosynthesis; quinolinate from L-kynurenine: step 2/3. Its function is as follows. Catalyzes the cleavage of L-kynurenine (L-Kyn) and L-3-hydroxykynurenine (L-3OHKyn) into anthranilic acid (AA) and 3-hydroxyanthranilic acid (3-OHAA), respectively. This is Kynureninase 2 from Phaeosphaeria nodorum (strain SN15 / ATCC MYA-4574 / FGSC 10173) (Glume blotch fungus).